Here is a 293-residue protein sequence, read N- to C-terminus: AA9 family lytic polysaccharide monooxygenase E (293 aa).

Positions 1 to 19 are cleaved as a signal peptide; sequence MKGLLSVAALSLAVSEVSA. Residues His20 and His90 each coordinate Cu(2+). A disulfide bridge connects residues Cys59 and Cys172. O2 is bound by residues His158 and Gln167. Tyr169 provides a ligand contact to Cu(2+). The region spanning 257–293 is the CBM1 domain; it reads CAVAKWGQCGGNGWTGCTTCAAGSTCNTQNAYYHQCV.

Belongs to the polysaccharide monooxygenase AA9 family. Requires Cu(2+) as cofactor.

It is found in the secreted. It carries out the reaction [(1-&gt;4)-beta-D-glucosyl]n+m + reduced acceptor + O2 = 4-dehydro-beta-D-glucosyl-[(1-&gt;4)-beta-D-glucosyl]n-1 + [(1-&gt;4)-beta-D-glucosyl]m + acceptor + H2O.. Glucose dehydrogenase and aryl-alcohol quinone oxidoreductases regulate the oxidative degradation of cellulose since they can act as catalytically efficient electron donors for LPMO9E. Functionally, lytic polysaccharide monooxygenase (LPMO) that depolymerizes crystalline and amorphous polysaccharides via the oxidation of scissile alpha- or beta-(1-4)-glycosidic bonds, yielding only C1 oxidation products. Catalysis by LPMOs requires the reduction of the active-site copper from Cu(II) to Cu(I) by a reducing agent and H(2)O(2) or O(2) as a cosubstrate. Improves the progression of lytic enzymes in delignified miscanthus cell walls. This boosting effect dependents on the cellular type which indicates contrasted recalcitrance levels in plant tissues. The protein is AA9 family lytic polysaccharide monooxygenase E of Podospora anserina (strain S / ATCC MYA-4624 / DSM 980 / FGSC 10383) (Pleurage anserina).